A 149-amino-acid polypeptide reads, in one-letter code: Large-conductance mechanosensitive channel (149 aa).

A run of 3 helical transmembrane segments spans residues 16-36, 40-60, and 89-109; these read VMDL…VNSV, LIMP…KFIL, and GSFI…FMMV.

This sequence belongs to the MscL family. As to quaternary structure, homopentamer.

The protein resides in the cell inner membrane. In terms of biological role, channel that opens in response to stretch forces in the membrane lipid bilayer. May participate in the regulation of osmotic pressure changes within the cell. This chain is Large-conductance mechanosensitive channel, found in Paraburkholderia phymatum (strain DSM 17167 / CIP 108236 / LMG 21445 / STM815) (Burkholderia phymatum).